We begin with the raw amino-acid sequence, 757 residues long: Lysyl oxidase homolog 4 (757 aa).

The first 25 residues, methionine 1–proline 25, serve as a signal peptide directing secretion. 4 consecutive SRCR domains span residues leucine 33–asparagine 134, valine 160–valine 288, valine 312–asparagine 412, and valine 422–threonine 530. Cystine bridges form between cysteine 59/cysteine 123, cysteine 72/cysteine 133, cysteine 103/cysteine 113, cysteine 192/cysteine 277, cysteine 205/cysteine 287, cysteine 252/cysteine 262, cysteine 337/cysteine 401, cysteine 350/cysteine 411, cysteine 381/cysteine 391, cysteine 451/cysteine 516, cysteine 464/cysteine 529, cysteine 498/cysteine 508, cysteine 559/cysteine 565, cysteine 611/cysteine 659, cysteine 643/cysteine 649, cysteine 671/cysteine 681, and cysteine 718/cysteine 732. N-linked (GlcNAc...) asparagine glycosylation occurs at asparagine 199. Positions proline 534–serine 737 are lysyl-oxidase like. 3 residues coordinate Cu cation: histidine 612, histidine 614, and histidine 616. Asparagine 630 is a glycosylation site (N-linked (GlcNAc...) asparagine). Positions lysine 639–tyrosine 675 form a cross-link, lysine tyrosylquinone (Lys-Tyr). The residue at position 675 (tyrosine 675) is a 2',4',5'-topaquinone.

The protein belongs to the lysyl oxidase family. Requires Cu cation as cofactor. It depends on lysine tyrosylquinone residue as a cofactor. In terms of processing, the lysine tyrosylquinone cross-link (LTQ) is generated by condensation of the epsilon-amino group of a lysine with a topaquinone produced by oxidation of tyrosine. May be proteolytically cleaved by BMP1.

It localises to the secreted. It is found in the extracellular space. The enzyme catalyses L-lysyl-[protein] + O2 + H2O = (S)-2-amino-6-oxohexanoyl-[protein] + H2O2 + NH4(+). Catalyzes the oxidative deamination of lysine and hydroxylysine residues in collagen and elastin, resulting in the formation of covalent cross-linkages, and the stabilization of collagen and elastin fibers. The polypeptide is Lysyl oxidase homolog 4 (LOXL4) (Bos taurus (Bovine)).